The primary structure comprises 473 residues: Photosystem II CP43 reaction center protein (473 aa).

A propeptide spanning residues M1–E14 is cleaved from the precursor. T15 bears the N-acetylthreonine mark. T15 carries the post-translational modification Phosphothreonine. Transmembrane regions (helical) follow at residues L69–A93, L134–N155, K178–T200, K255–S275, and W291–A312. Residue E367 coordinates [CaMn4O5] cluster. Residues R447–P471 traverse the membrane as a helical segment.

It belongs to the PsbB/PsbC family. PsbC subfamily. In terms of assembly, PSII is composed of 1 copy each of membrane proteins PsbA, PsbB, PsbC, PsbD, PsbE, PsbF, PsbH, PsbI, PsbJ, PsbK, PsbL, PsbM, PsbT, PsbX, PsbY, PsbZ, Psb30/Ycf12, at least 3 peripheral proteins of the oxygen-evolving complex and a large number of cofactors. It forms dimeric complexes. Binds multiple chlorophylls and provides some of the ligands for the Ca-4Mn-5O cluster of the oxygen-evolving complex. It may also provide a ligand for a Cl- that is required for oxygen evolution. PSII binds additional chlorophylls, carotenoids and specific lipids. is required as a cofactor.

It is found in the plastid. It localises to the chloroplast thylakoid membrane. Functionally, one of the components of the core complex of photosystem II (PSII). It binds chlorophyll and helps catalyze the primary light-induced photochemical processes of PSII. PSII is a light-driven water:plastoquinone oxidoreductase, using light energy to abstract electrons from H(2)O, generating O(2) and a proton gradient subsequently used for ATP formation. The chain is Photosystem II CP43 reaction center protein from Welwitschia mirabilis (Tree tumbo).